The chain runs to 225 residues: 2-C-methyl-D-erythritol 4-phosphate cytidylyltransferase (225 aa).

This sequence belongs to the IspD/TarI cytidylyltransferase family. IspD subfamily.

It catalyses the reaction 2-C-methyl-D-erythritol 4-phosphate + CTP + H(+) = 4-CDP-2-C-methyl-D-erythritol + diphosphate. It participates in isoprenoid biosynthesis; isopentenyl diphosphate biosynthesis via DXP pathway; isopentenyl diphosphate from 1-deoxy-D-xylulose 5-phosphate: step 2/6. Functionally, catalyzes the formation of 4-diphosphocytidyl-2-C-methyl-D-erythritol from CTP and 2-C-methyl-D-erythritol 4-phosphate (MEP). In Cereibacter sphaeroides (strain ATCC 17023 / DSM 158 / JCM 6121 / CCUG 31486 / LMG 2827 / NBRC 12203 / NCIMB 8253 / ATH 2.4.1.) (Rhodobacter sphaeroides), this protein is 2-C-methyl-D-erythritol 4-phosphate cytidylyltransferase.